A 630-amino-acid chain; its full sequence is Threonine--tRNA ligase (630 aa).

The tract at residues 1–137 is editing domain; it reads MKVLLIHSDY…PLSELSRKIT (137 aa). Positions 207 to 506 are catalytic; it reads PHVKFITEKE…ADAGAPPMLP (300 aa). Residues Cys299, His351, and His475 each coordinate Zn(2+).

Belongs to the class-II aminoacyl-tRNA synthetase family. As to quaternary structure, homodimer. Zn(2+) serves as cofactor.

It localises to the cytoplasm. It carries out the reaction tRNA(Thr) + L-threonine + ATP = L-threonyl-tRNA(Thr) + AMP + diphosphate + H(+). Functionally, catalyzes the attachment of threonine to tRNA(Thr) in a two-step reaction: L-threonine is first activated by ATP to form Thr-AMP and then transferred to the acceptor end of tRNA(Thr). Also edits incorrectly charged L-seryl-tRNA(Thr). This Methanococcus aeolicus (strain ATCC BAA-1280 / DSM 17508 / OCM 812 / Nankai-3) protein is Threonine--tRNA ligase.